The primary structure comprises 304 residues: Probable intron-encoded endonuclease 1 (304 aa).

Positions 84 to 175 constitute a GIY-YIG domain; the sequence is DKGGIYSFIN…RFNFDNLYNF (92 aa).

The protein to endonucleases of group I introns of fungi and phage.

It localises to the mitochondrion. Functionally, mitochondrial DNA endonuclease involved in intron homing. The sequence is that of Probable intron-encoded endonuclease 1 from Neurospora crassa (strain ATCC 24698 / 74-OR23-1A / CBS 708.71 / DSM 1257 / FGSC 987).